The chain runs to 89 residues: Small ribosomal subunit protein uS15 (89 aa).

This sequence belongs to the universal ribosomal protein uS15 family. In terms of assembly, part of the 30S ribosomal subunit. Forms a bridge to the 50S subunit in the 70S ribosome, contacting the 23S rRNA.

Its function is as follows. One of the primary rRNA binding proteins, it binds directly to 16S rRNA where it helps nucleate assembly of the platform of the 30S subunit by binding and bridging several RNA helices of the 16S rRNA. Functionally, forms an intersubunit bridge (bridge B4) with the 23S rRNA of the 50S subunit in the ribosome. The protein is Small ribosomal subunit protein uS15 of Salinispora tropica (strain ATCC BAA-916 / DSM 44818 / JCM 13857 / NBRC 105044 / CNB-440).